A 493-amino-acid chain; its full sequence is D-glyceraldehyde dehydrogenase (NADP(+)) (493 aa).

Residues 70–92 (RAKELIEKNRAELENIIMEENGK) are a coiled coil. Residues 146–149 (TPWN), arginine 157, 172–176 (KPSSD), 204–210 (RGSEIGD), 225–248 (GSTA…ILEL), cysteine 281, and 381–383 (EIF) each bind NADP(+). Substrate contacts are provided by asparagine 149 and arginine 157. The active-site Proton acceptor is glutamate 247. Cysteine 281 contacts substrate. Cysteine 281 (proton donor) is an active-site residue.

This sequence belongs to the aldehyde dehydrogenase family. Glyceraldehyde dehydrogenase subfamily. As to quaternary structure, homotetramer. Dimer of dimers.

It catalyses the reaction D-glyceraldehyde + NADP(+) + H2O = (R)-glycerate + NADPH + 2 H(+). It participates in carbohydrate degradation; glycolysis. With respect to regulation, inhibited by calcium, cadmium, copper and mercury ions. Stable for 2 hours at 60 degrees Celsius but activity is decreased to less than 50 percent within 20 minutes at 80 degrees Celsius. Two folds activity enhancement in the presence of 1 mM glutathione, DTT, or 2-mercaptoethanol. Complete activity inhibition by thiol-modifying reagents such as p-chloromercuribenzoic acid or p-hydroxy-mercuribenzoic acid. NADP-dependent dehydrogenase of the nED (non-phosphorylated Entner-Doudoroff) pathway with highest activity towards glyceraldehydes (e.g. D,L-glyceraldehyde and D-glyceraldehyde), to a lesser extent towards D,L-glyceraldehyde-3-phosphate and glycolaldehyde, but no activity towards aliphatic or aromatic aldehydes. The sequence is that of D-glyceraldehyde dehydrogenase (NADP(+)) from Thermoplasma acidophilum (strain ATCC 25905 / DSM 1728 / JCM 9062 / NBRC 15155 / AMRC-C165).